An 82-amino-acid chain; its full sequence is Probable tautomerase XF_1725 (82 aa).

Pro-2 (proton acceptor; via imino nitrogen) is an active-site residue.

The protein belongs to the 4-oxalocrotonate tautomerase family.

This chain is Probable tautomerase XF_1725, found in Xylella fastidiosa (strain 9a5c).